The primary structure comprises 59 residues: MRQLKGKPKKETSRDKKERKQAMQEARRQITTVVLPTLAVVVLLIVVFVYVATRPASTE.

The disordered stretch occupies residues 1–27; that stretch reads MRQLKGKPKKETSRDKKERKQAMQEAR. Residues 9-27 are compositionally biased toward basic and acidic residues; that stretch reads KKETSRDKKERKQAMQEAR. Positions 9 to 31 form a coiled coil; it reads KKETSRDKKERKQAMQEARRQIT. The chain crosses the membrane as a helical span at residues 32–52; the sequence is TVVLPTLAVVVLLIVVFVYVA.

It belongs to the SMCO4 family.

It is found in the membrane. The protein is Single-pass membrane and coiled-coil domain-containing protein 4 (SMCO4) of Bos taurus (Bovine).